We begin with the raw amino-acid sequence, 370 residues long: Proline-rich protein 5-like (370 aa).

Phosphoserine is present on Ser28. Disordered regions lie at residues 312-346 (LGEE…LDSP) and 351-370 (LEDV…ASLS).

Belongs to the PROTOR family. In terms of assembly, interacts with the mammalian target of rapamycin complex 2 (mTORC2) which contains MTOR, MLST8, PRR5, RICTOR, MAPKAP1 and DEPTOR. Interacts with RFFL. Interacts (via C-terminus) with ZFP36 (via C-terminus); this interaction may accelerate ZFP36-mediated mRNA decay during stress. Interacts with RICTOR. Ubiquitinated. Ubiquitination by RFFL promotes proteasomal degradation of PRR5L thereby modifying the substrate-specific activity of the mTORC2 complex. Ubiquitination by RFFL is stimulated by LPA/lysophosphatidic acid.

Its function is as follows. Associates with the mTORC2 complex that regulates cellular processes including survival and organization of the cytoskeleton. Regulates the activity of the mTORC2 complex in a substrate-specific manner preventing for instance the specific phosphorylation of PKCs and thereby controlling cell migration. Plays a role in the stimulation of ZFP36-mediated mRNA decay of several ZFP36-associated mRNAs, such as TNF-alpha and GM-CSF, in response to stress. Required for ZFP36 localization to cytoplasmic stress granule (SG) and P-body (PB) in response to stress. This is Proline-rich protein 5-like (Prr5l) from Mus musculus (Mouse).